We begin with the raw amino-acid sequence, 108 residues long: Small ribosomal subunit protein bS16 (108 aa).

It belongs to the bacterial ribosomal protein bS16 family.

The chain is Small ribosomal subunit protein bS16 from Orientia tsutsugamushi (strain Boryong) (Rickettsia tsutsugamushi).